A 289-amino-acid polypeptide reads, in one-letter code: Diaminopimelate epimerase (289 aa).

Substrate-binding residues include Asn-13, Gln-47, and Asn-67. Residue Cys-76 is the Proton donor of the active site. Substrate contacts are provided by residues 77–78 (GN), Asn-167, Asn-200, and 218–219 (ER). The active-site Proton acceptor is Cys-227. Substrate is bound at residue 228 to 229 (GT).

Belongs to the diaminopimelate epimerase family. As to quaternary structure, homodimer.

Its subcellular location is the cytoplasm. It carries out the reaction (2S,6S)-2,6-diaminopimelate = meso-2,6-diaminopimelate. It functions in the pathway amino-acid biosynthesis; L-lysine biosynthesis via DAP pathway; DL-2,6-diaminopimelate from LL-2,6-diaminopimelate: step 1/1. Its function is as follows. Catalyzes the stereoinversion of LL-2,6-diaminopimelate (L,L-DAP) to meso-diaminopimelate (meso-DAP), a precursor of L-lysine and an essential component of the bacterial peptidoglycan. The sequence is that of Diaminopimelate epimerase from Burkholderia vietnamiensis (strain G4 / LMG 22486) (Burkholderia cepacia (strain R1808)).